The primary structure comprises 341 residues: L-threonine 3-dehydrogenase (341 aa).

Cys38 contributes to the Zn(2+) binding site. Active-site charge relay system residues include Thr40 and His43. Zn(2+) is bound by residues His63, Glu64, Cys93, Cys96, Cys99, and Cys107. NAD(+)-binding positions include Ile175, Asp195, Arg200, Leu262–Ile264, and Ile286–Tyr287.

It belongs to the zinc-containing alcohol dehydrogenase family. As to quaternary structure, homotetramer. The cofactor is Zn(2+).

The protein localises to the cytoplasm. The enzyme catalyses L-threonine + NAD(+) = (2S)-2-amino-3-oxobutanoate + NADH + H(+). Its pathway is amino-acid degradation; L-threonine degradation via oxydo-reductase pathway; glycine from L-threonine: step 1/2. In terms of biological role, catalyzes the NAD(+)-dependent oxidation of L-threonine to 2-amino-3-ketobutyrate. In Yersinia enterocolitica serotype O:8 / biotype 1B (strain NCTC 13174 / 8081), this protein is L-threonine 3-dehydrogenase.